A 340-amino-acid chain; its full sequence is MSEKNAYAKSGVDVEAGYEVVERIKKHVARTERAGVMGALGGFGGMFDLSKTGVKEPVLVSGTDGVGTKLMLAIKYDKHDTIGQDCVAMCVNDIIAAGAEPLYFLDYIATGKNNPVKLEEVVSGVAEGCVQAGAALIGGETAEMPGMYGQDDYDLAGFAVGVAEKSQIIDGSKVKEGDILLGLASSGIHSNGYSLVRRVFADYTGKELLPELEGKQLKDVLLEPTRIYVKAALPLIKEELVKGIGHITGGGFIENIPRMFADDLAAEIDEDKVPVLPIFKALEKYGDIKHEEMFEIFNMGVGLMLAVSPENVNRVKELLDEPVYEIGRIIKKADASVVIK.

Belongs to the AIR synthase family.

It is found in the cytoplasm. The enzyme catalyses 2-formamido-N(1)-(5-O-phospho-beta-D-ribosyl)acetamidine + ATP = 5-amino-1-(5-phospho-beta-D-ribosyl)imidazole + ADP + phosphate + H(+). Its pathway is purine metabolism; IMP biosynthesis via de novo pathway; 5-amino-1-(5-phospho-D-ribosyl)imidazole from N(2)-formyl-N(1)-(5-phospho-D-ribosyl)glycinamide: step 2/2. The polypeptide is Phosphoribosylformylglycinamidine cyclo-ligase (Streptococcus pyogenes serotype M1).